A 414-amino-acid chain; its full sequence is 2,3-diketo-5-methylthiopentyl-1-phosphate enolase (414 aa).

Lys-99 acts as the Proton acceptor in catalysis. Substrate is bound by residues Lys-148, 174 to 177, His-265, Gly-338, and 360 to 361; these read KDDE and GG. 3 residues coordinate Mg(2+): Lys-174, Asp-176, and Glu-177. The residue at position 174 (Lys-174) is an N6-carboxylysine.

The protein belongs to the RuBisCO large chain family. Type IV subfamily. Homodimer. Mg(2+) is required as a cofactor.

The enzyme catalyses 5-methylsulfanyl-2,3-dioxopentyl phosphate = 2-hydroxy-5-methylsulfanyl-3-oxopent-1-enyl phosphate. Its pathway is amino-acid biosynthesis; L-methionine biosynthesis via salvage pathway; L-methionine from S-methyl-5-thio-alpha-D-ribose 1-phosphate: step 3/6. Its function is as follows. Catalyzes the enolization of 2,3-diketo-5-methylthiopentyl-1-phosphate (DK-MTP-1-P) into 2-hydroxy-3-keto-5-methylthiopentenyl-1-phosphate (HK-MTPenyl-1-P). This Bacillus cereus (strain ATCC 10987 / NRS 248) protein is 2,3-diketo-5-methylthiopentyl-1-phosphate enolase.